Reading from the N-terminus, the 50-residue chain is Fungus-induced protein 3 (50 aa).

The chain is Fungus-induced protein 3 (fip-3) from Caenorhabditis elegans.